The primary structure comprises 136 residues: Histone H3.1 (136 aa).

Residues 1–41 (MARTKQTARKSTGGKAPRKQLATKAARKSAPAAGGVKKPHR) are disordered. Lys-5 is subject to N6,N6,N6-trimethyllysine; alternate. An N6,N6-dimethyllysine; alternate modification is found at Lys-5. N6-methyllysine; alternate occurs at positions 5 and 10. Lys-10 is modified (N6-acetyllysine; alternate). Ser-11 is subject to Phosphoserine. Residue Lys-15 is modified to N6,N6-dimethyllysine; alternate. N6-acetyllysine; alternate is present on residues Lys-15, Lys-19, Lys-24, Lys-28, and Lys-37. Residues Lys-19, Lys-24, Lys-28, and Lys-37 each carry the N6-methyllysine; alternate modification. Over residues 22 to 33 (ATKAARKSAPAA) the composition is skewed to low complexity. Residues Lys-28 and Lys-37 each carry the N6,N6,N6-trimethyllysine; alternate modification. N6,N6-dimethyllysine; alternate occurs at positions 28 and 37. 2 positions are modified to N6-acetyllysine: Lys-57 and Lys-65. An N6,N6,N6-trimethyllysine; alternate modification is found at Lys-80. An N6,N6-dimethyllysine; alternate modification is found at Lys-80. Lys-80 is subject to N6-methyllysine; alternate.

The protein belongs to the histone H3 family. In terms of assembly, the nucleosome is a histone octamer containing two molecules each of H2A, H2B, H3 and H4 assembled in one H3-H4 heterotetramer and two H2A-H2B heterodimers. The octamer wraps approximately 147 bp of DNA. In terms of processing, phosphorylated to form H3S10ph. H3S10ph promotes subsequent H3K14ac formation and is required for transcriptional activation through TBP recruitment to the promoters. Post-translationally, mono-, di- and trimethylated by the COMPASS complex to form H3K4me1/2/3. H3K4me activates gene expression by regulating transcription elongation and plays a role in telomere length maintenance. H3K4me enrichment correlates with transcription levels, and occurs in a 5' to 3' gradient with H3K4me3 enrichment at the 5'-end of genes, shifting to H3K4me2 and then H3K4me1. Methylated by SET2 to form H3K36me. H3K36me represses gene expression. Methylated by DOT1 to form H3K79me. H3K79me is required for association of SIR proteins with telomeric regions and for telomeric silencing. The COMPASS-mediated formation of H3K4me2/3 and the DOT1-mediated formation of H3K79me require H2BK123ub1. Acetylation of histone H3 leads to transcriptional activation. H3K14ac formation by GCN5 is promoted by H3S10ph. H3K14ac can also be formed by ESA1. H3K56ac formation occurs predominantly in newly synthesized H3 molecules during G1, S and G2/M of the cell cycle and may be involved in DNA repair.

It localises to the nucleus. Its subcellular location is the chromosome. Functionally, core component of nucleosome. Nucleosomes wrap and compact DNA into chromatin, limiting DNA accessibility to the cellular machineries which require DNA as a template. Histones thereby play a central role in transcription regulation, DNA repair, DNA replication and chromosomal stability. DNA accessibility is regulated via a complex set of post-translational modifications of histones, also called histone code, and nucleosome remodeling. This is Histone H3.1 (HHT1) from Mycosarcoma maydis (Corn smut fungus).